A 247-amino-acid polypeptide reads, in one-letter code: Adenosylcobinamide-GDP ribazoletransferase (247 aa).

The next 5 membrane-spanning stretches (helical) occupy residues Ile-34–Val-54, Cys-59–Phe-79, Gly-113–Leu-133, Ile-138–Tyr-158, and Val-194–Ile-214.

It belongs to the CobS family. It depends on Mg(2+) as a cofactor.

The protein resides in the cell inner membrane. It carries out the reaction alpha-ribazole + adenosylcob(III)inamide-GDP = adenosylcob(III)alamin + GMP + H(+). The enzyme catalyses alpha-ribazole 5'-phosphate + adenosylcob(III)inamide-GDP = adenosylcob(III)alamin 5'-phosphate + GMP + H(+). Its pathway is cofactor biosynthesis; adenosylcobalamin biosynthesis; adenosylcobalamin from cob(II)yrinate a,c-diamide: step 7/7. In terms of biological role, joins adenosylcobinamide-GDP and alpha-ribazole to generate adenosylcobalamin (Ado-cobalamin). Also synthesizes adenosylcobalamin 5'-phosphate from adenosylcobinamide-GDP and alpha-ribazole 5'-phosphate. The polypeptide is Adenosylcobinamide-GDP ribazoletransferase (Shigella boydii serotype 4 (strain Sb227)).